Reading from the N-terminus, the 491-residue chain is Iota-carrageenase (491 aa).

Positions 1–23 are cleaved as a signal peptide; sequence MRLYFRKLWLTNLFLGGALASSA. Cystine bridges form between cysteine 269/cysteine 298, cysteine 336/cysteine 360, cysteine 408/cysteine 476, and cysteine 412/cysteine 484.

The protein belongs to the glycosyl hydrolase 82 family.

Its subcellular location is the secreted. It catalyses the reaction Endohydrolysis of 1,4-beta-D-linkages between D-galactose 4-sulfate and 3,6-anhydro-D-galactose-2-sulfate in iota-carrageenans.. In terms of biological role, hydrolyzes iota-carrageenans, sulfated 1,3-alpha-1,4-beta galactans from red algal cell walls, with an inversion of anomeric configuration. Also active against hybrid iota-/nu-carrageenan, not active against kappa- or lambda-carrageenans. This Alteromonas macleodii (Pseudoalteromonas macleodii) protein is Iota-carrageenase.